The primary structure comprises 202 residues: Small ribosomal subunit protein uS4c (202 aa).

Residues 90 to 153 (MRLDNVIFRL…KSEAIISKNI (64 aa)) enclose the S4 RNA-binding domain.

Belongs to the universal ribosomal protein uS4 family. Part of the 30S ribosomal subunit. Contacts protein S5. The interaction surface between S4 and S5 is involved in control of translational fidelity.

It is found in the plastid. The protein localises to the chloroplast. In terms of biological role, one of the primary rRNA binding proteins, it binds directly to 16S rRNA where it nucleates assembly of the body of the 30S subunit. Functionally, with S5 and S12 plays an important role in translational accuracy. In Hypopterygium didictyon, this protein is Small ribosomal subunit protein uS4c (rps4).